Here is a 349-residue protein sequence, read N- to C-terminus: Micronemal protein 6 (349 aa).

A signal peptide spans 1–23; it reads MRLFRCCAAAVVAAESLLWLKNG. EGF-like domains are found at residues 36-80, 96-134, and 147-192; these read IADN…VTCM, TPAA…SLDG, and GCEE…ITCK. 9 disulfides stabilise this stretch: cysteine 40–cysteine 53, cysteine 45–cysteine 62, cysteine 64–cysteine 79, cysteine 100–cysteine 113, cysteine 105–cysteine 122, cysteine 124–cysteine 140, cysteine 148–cysteine 162, cysteine 153–cysteine 173, and cysteine 175–cysteine 191. Residues 194–291 are disordered; it reads VPPHYRKPPF…EEGSGHAGAI (98 aa). An acidic domain region spans residues 204–283; sequence EFGKGGHPVD…SEEQGKEREE (80 aa). Basic and acidic residues-rich tracts occupy residues 210–247 and 276–285; these read HPVD…RTPL and EQGKEREEGS. Residues 290 to 310 traverse the membrane as a helical segment; sequence AIAGGVIGGLLLLSAAGAGVA.

In terms of assembly, interacts directly with MIC1. Part of the MIC6-MIC1-MIC4 complex. Subject to proteolytic processing involving both the N-terminus and the C-terminus. The first EGF-like domain (EGF-like domain 1) is removed by proteolytic cleavage by ASP3 and is not present in the mature protein. Released as soluble 35 kDa protein after proteolytic processing at the C-terminus.

The protein localises to the cytoplasmic vesicle. Its subcellular location is the secretory vesicle. It localises to the microneme membrane. The protein resides in the secreted. Its function is as follows. Escorter protein required for import of MIC1 and MIC4 adhesins into the microneme. The sequence is that of Micronemal protein 6 from Toxoplasma gondii.